The chain runs to 207 residues: Histidine biosynthesis bifunctional protein HisIE (207 aa).

The phosphoribosyl-AMP cyclohydrolase stretch occupies residues 1 to 117 (MQNFKELNEK…KISKNADFVF (117 aa)). Residues 118–207 (LARLEKLINA…ISKLKERHKA (90 aa)) form a phosphoribosyl-ATP pyrophosphohydrolase region.

This sequence in the N-terminal section; belongs to the PRA-CH family. The protein in the C-terminal section; belongs to the PRA-PH family.

The protein localises to the cytoplasm. The catalysed reaction is 1-(5-phospho-beta-D-ribosyl)-ATP + H2O = 1-(5-phospho-beta-D-ribosyl)-5'-AMP + diphosphate + H(+). The enzyme catalyses 1-(5-phospho-beta-D-ribosyl)-5'-AMP + H2O = 1-(5-phospho-beta-D-ribosyl)-5-[(5-phospho-beta-D-ribosylamino)methylideneamino]imidazole-4-carboxamide. It functions in the pathway amino-acid biosynthesis; L-histidine biosynthesis; L-histidine from 5-phospho-alpha-D-ribose 1-diphosphate: step 2/9. Its pathway is amino-acid biosynthesis; L-histidine biosynthesis; L-histidine from 5-phospho-alpha-D-ribose 1-diphosphate: step 3/9. The chain is Histidine biosynthesis bifunctional protein HisIE (hisI) from Campylobacter jejuni subsp. jejuni serotype O:2 (strain ATCC 700819 / NCTC 11168).